A 116-amino-acid chain; its full sequence is Toxin ICK-10 (116 aa).

The signal sequence occupies residues 1–19 (MMKLYSLVIIATLAAAAFA). Disulfide bonds link Cys56–Cys71, Cys64–Cys77, Cys68–Cys113, and Cys70–Cys84.

Belongs to the neurotoxin 25 family. ICK-8 subfamily. As to expression, expressed by the venom gland.

It localises to the secreted. Its function is as follows. Ion channel inhibitor. This chain is Toxin ICK-10, found in Trittame loki (Brush-footed trapdoor spider).